The chain runs to 223 residues: Deoxyribose-phosphate aldolase (223 aa).

The active-site Proton donor/acceptor is D91. Catalysis depends on K153, which acts as the Schiff-base intermediate with acetaldehyde. Residue K182 is the Proton donor/acceptor of the active site.

The protein belongs to the DeoC/FbaB aldolase family. DeoC type 1 subfamily.

The protein localises to the cytoplasm. The enzyme catalyses 2-deoxy-D-ribose 5-phosphate = D-glyceraldehyde 3-phosphate + acetaldehyde. It participates in carbohydrate degradation; 2-deoxy-D-ribose 1-phosphate degradation; D-glyceraldehyde 3-phosphate and acetaldehyde from 2-deoxy-alpha-D-ribose 1-phosphate: step 2/2. Its function is as follows. Catalyzes a reversible aldol reaction between acetaldehyde and D-glyceraldehyde 3-phosphate to generate 2-deoxy-D-ribose 5-phosphate. The chain is Deoxyribose-phosphate aldolase from Yersinia pseudotuberculosis serotype O:1b (strain IP 31758).